The following is a 247-amino-acid chain: Translation initiation factor IF-3 (247 aa).

2 disordered regions span residues 1–20 (MIRE…TNRR) and 188–247 (LVRQ…PTAS). The segment at 182–247 (AQKARELVRQ…AAEAQSPTAS (66 aa)) is needed for vegetative and developmental functions, but not for viability. Residues 207-217 (AGKSAAGASSG) are compositionally biased toward low complexity. Positions 218 to 232 (AEEKAEETAEEKKEA) are enriched in basic and acidic residues. The span at 233–247 (QAAPAAAEAQSPTAS) shows a compositional bias: low complexity.

The protein belongs to the IF-3 family. Monomer.

It is found in the cytoplasm. In terms of biological role, IF-3 binds to the 30S ribosomal subunit and shifts the equilibrium between 70S ribosomes and their 50S and 30S subunits in favor of the free subunits, thus enhancing the availability of 30S subunits on which protein synthesis initiation begins. In Myxococcus xanthus, this protein is Translation initiation factor IF-3.